Consider the following 478-residue polypeptide: Pyruvate kinase (478 aa).

R36 contacts substrate. K(+)-binding residues include N38, S40, and D70. Position 38–41 (38–41 (NFSH)) interacts with ATP. Residues R77 and K160 each coordinate ATP. E225 contributes to the Mg(2+) binding site. Positions 251, 252, and 284 each coordinate substrate. D252 contacts Mg(2+).

This sequence belongs to the pyruvate kinase family. As to quaternary structure, homotetramer. The cofactor is Mg(2+). It depends on K(+) as a cofactor.

It catalyses the reaction pyruvate + ATP = phosphoenolpyruvate + ADP + H(+). It functions in the pathway carbohydrate degradation; glycolysis; pyruvate from D-glyceraldehyde 3-phosphate: step 5/5. With respect to regulation, allosterically activated by AMP and by several sugar phosphates. Belongs to type II PK. This Haemophilus influenzae (strain ATCC 51907 / DSM 11121 / KW20 / Rd) protein is Pyruvate kinase (pykA).